Reading from the N-terminus, the 124-residue chain is Probable dihydroneopterin aldolase (124 aa).

Residues E23, Y56, and 75-76 (IE) contribute to the substrate site. K103 serves as the catalytic Proton donor/acceptor.

This sequence belongs to the DHNA family.

The enzyme catalyses 7,8-dihydroneopterin = 6-hydroxymethyl-7,8-dihydropterin + glycolaldehyde. It participates in cofactor biosynthesis; tetrahydrofolate biosynthesis; 2-amino-4-hydroxy-6-hydroxymethyl-7,8-dihydropteridine diphosphate from 7,8-dihydroneopterin triphosphate: step 3/4. Catalyzes the conversion of 7,8-dihydroneopterin to 6-hydroxymethyl-7,8-dihydropterin. This Chlamydia trachomatis serovar D (strain ATCC VR-885 / DSM 19411 / UW-3/Cx) protein is Probable dihydroneopterin aldolase (folB).